The sequence spans 208 residues: MLKIIFPSFMLLPLTWLSSNKKVWINVTTYSLLINLISINLLWQNNENNLSFSTMFSADPLSAPLLVLTTWLLPLMLLASQNHIKKESEHNKKLYISLLVCLQTLLIMTFSANELIMFYILFEATLIPTLIIITRWGNQTERLNAGIYFLFYTLVGSIPLLIALIYIQNWTGTLNLILMTLDSSPINQTWSNNILWLACIMAFMVKMP.

6 helical membrane passes run 23-43 (VWIN…NLLW), 60-80 (PLSA…LLAS), 93-113 (KLYI…FSAN), 114-134 (ELIM…IIIT), 147-167 (IYFL…LIYI), and 185-205 (PINQ…AFMV).

This sequence belongs to the complex I subunit 4 family. Core subunit of respiratory chain NADH dehydrogenase (Complex I) which is composed of 45 different subunits.

The protein localises to the mitochondrion inner membrane. It carries out the reaction a ubiquinone + NADH + 5 H(+)(in) = a ubiquinol + NAD(+) + 4 H(+)(out). Its function is as follows. Core subunit of the mitochondrial membrane respiratory chain NADH dehydrogenase (Complex I) which catalyzes electron transfer from NADH through the respiratory chain, using ubiquinone as an electron acceptor. Essential for the catalytic activity and assembly of complex I. The polypeptide is NADH-ubiquinone oxidoreductase chain 4 (MT-ND4) (Microtus pennsylvanicus (Meadow vole)).